Consider the following 176-residue polypeptide: Ribosome maturation factor RimM (176 aa).

Residues 100 to 172 enclose the PRC barrel domain; the sequence is PDTYYDHQLV…IVEIDPPHGL (73 aa).

It belongs to the RimM family. In terms of assembly, binds ribosomal protein uS19.

The protein resides in the cytoplasm. Its function is as follows. An accessory protein needed during the final step in the assembly of 30S ribosomal subunit, possibly for assembly of the head region. Essential for efficient processing of 16S rRNA. May be needed both before and after RbfA during the maturation of 16S rRNA. It has affinity for free ribosomal 30S subunits but not for 70S ribosomes. The sequence is that of Ribosome maturation factor RimM from Mycobacterium bovis (strain ATCC BAA-935 / AF2122/97).